Consider the following 465-residue polypeptide: UDP-N-acetylmuramate--L-alanine ligase (465 aa).

An ATP-binding site is contributed by 114-120; sequence GTHGKTT.

Belongs to the MurCDEF family.

Its subcellular location is the cytoplasm. It catalyses the reaction UDP-N-acetyl-alpha-D-muramate + L-alanine + ATP = UDP-N-acetyl-alpha-D-muramoyl-L-alanine + ADP + phosphate + H(+). Its pathway is cell wall biogenesis; peptidoglycan biosynthesis. Its function is as follows. Cell wall formation. This is UDP-N-acetylmuramate--L-alanine ligase from Chelativorans sp. (strain BNC1).